The chain runs to 348 residues: MDNSSICNPNATICEGDSCIAPESNFNAILSVVMSTVLTILLALVMFSMGCNVELHKFLGHLRRPWGIVVGFLCQFGIMPLTGFVLSVAFGILPVQAVVVLIQGCCPGGTASNILAYWVDGDMDLSVSMTTCSTLLALGMMPLCLFIYTKMWVDSGTIVIPYDSIGTSLVALVIPVSIGMYVNHKWPQKAKIILKIGSIAGAILIVLIAVVGGILYQSAWTIEPKLWIIGTIYPIAGYGLGFFLARIAGQPWYRCRTVALETGLQNTQLCSTIVQLSFSPEDLNLVFTFPLIYSIFQIAFAAILLGAYVAYKKCHGKNNTELQEKTDNEMEPRSSFQETNKGFQPDEK.

Residues 1–28 (MDNSSICNPNATICEGDSCIAPESNFNA) lie on the Extracellular side of the membrane. 2 N-linked (GlcNAc...) asparagine glycosylation sites follow: N3 and N10. Residues 29–49 (ILSVVMSTVLTILLALVMFSM) traverse the membrane as a helical segment. Residues 50–81 (GCNVELHKFLGHLRRPWGIVVGFLCQFGIMPL) lie on the Cytoplasmic side of the membrane. Residues 82 to 102 (TGFVLSVAFGILPVQAVVVLI) form a helical membrane-spanning segment. Residues 103–126 (QGCCPGGTASNILAYWVDGDMDLS) are Extracellular-facing. The chain crosses the membrane as a helical span at residues 127–147 (VSMTTCSTLLALGMMPLCLFI). Topologically, residues 148–157 (YTKMWVDSGT) are cytoplasmic. A helical transmembrane segment spans residues 158-178 (IVIPYDSIGTSLVALVIPVSI). Residues 179 to 195 (GMYVNHKWPQKAKIILK) lie on the Extracellular side of the membrane. Residues 196 to 216 (IGSIAGAILIVLIAVVGGILY) traverse the membrane as a helical segment. Over 217-224 (QSAWTIEP) the chain is Cytoplasmic. A helical membrane pass occupies residues 225 to 245 (KLWIIGTIYPIAGYGLGFFLA). Over 246 to 284 (RIAGQPWYRCRTVALETGLQNTQLCSTIVQLSFSPEDLN) the chain is Extracellular. A helical transmembrane segment spans residues 285–305 (LVFTFPLIYSIFQIAFAAILL). Topologically, residues 306–348 (GAYVAYKKCHGKNNTELQEKTDNEMEPRSSFQETNKGFQPDEK) are cytoplasmic. The segment covering 322-332 (LQEKTDNEMEP) has biased composition (basic and acidic residues). The tract at residues 322-348 (LQEKTDNEMEPRSSFQETNKGFQPDEK) is disordered. A Phosphoserine modification is found at S335.

It belongs to the bile acid:sodium symporter (BASS) (TC 2.A.28) family. In terms of assembly, monomer and homodimer. As to expression, mainly expressed in ileum and kidney, lower expression in jejunum.

The protein localises to the membrane. The catalysed reaction is taurocholate(out) + 2 Na(+)(out) = taurocholate(in) + 2 Na(+)(in). It catalyses the reaction cholate(out) + 2 Na(+)(out) = cholate(in) + 2 Na(+)(in). It carries out the reaction taurochenodeoxycholate(out) + 2 Na(+)(out) = taurochenodeoxycholate(in) + 2 Na(+)(in). The enzyme catalyses tauroursodeoxycholate(out) + 2 Na(+)(out) = tauroursodeoxycholate(in) + 2 Na(+)(in). The catalysed reaction is glycocholate(out) + 2 Na(+)(out) = glycocholate(in) + 2 Na(+)(in). It catalyses the reaction tauronorcholate(out) + 2 Na(+)(out) = tauronorcholate(in) + 2 Na(+)(in). It carries out the reaction tauroallocholate(out) + 2 Na(+)(out) = tauroallocholate(in) + 2 Na(+)(in). The enzyme catalyses taurodeoxycholate(out) + 2 Na(+)(out) = taurodeoxycholate(in) + 2 Na(+)(in). The catalysed reaction is tauro-beta-muricholate(out) + 2 Na(+)(out) = tauro-beta-muricholate(in) + 2 Na(+)(in). Plays a critical role in the sodium-dependent reabsorption of bile acids from the lumen of the small intestine. Transports various bile acids, unconjugated or conjugated, such as cholate and taurocholate. Also responsible for bile acid transport in the renal proximal tubules, a salvage mechanism that helps conserve bile acids. Works collaboratively with the Na(+)-taurocholate cotransporting polypeptide (NTCP), the organic solute transporter (OST), and the bile salt export pump (BSEP), to ensure efficacious biological recycling of bile acids during enterohepatic circulation. In Cricetulus griseus (Chinese hamster), this protein is Ileal sodium/bile acid cotransporter (SLC10A2).